The primary structure comprises 486 residues: CUGBP Elav-like family member 5 (486 aa).

The segment covering 1–11 (MARLTEREARR) has biased composition (basic and acidic residues). The disordered stretch occupies residues 1–39 (MARLTEREARRQQQQHPPQQQQPRACPMSGPEPPAQQSD). Positions 12 to 24 (QQQQHPPQQQQPR) are enriched in low complexity. RRM domains follow at residues 47–128 (IKLF…PADS), 135–215 (RKLF…FADT), and 401–479 (CNLF…LKRP).

Belongs to the CELF/BRUNOL family.

Its subcellular location is the nucleus. The protein resides in the cytoplasm. Functionally, RNA-binding protein that may be implicated in the regulation of pre-mRNA alternative splicing. This is CUGBP Elav-like family member 5 (celf5) from Xenopus tropicalis (Western clawed frog).